The chain runs to 160 residues: Probable prefoldin subunit 5 (160 aa).

It belongs to the prefoldin subunit alpha family. As to quaternary structure, heterohexamer of two PFD-alpha type and four PFD-beta type subunits.

Its function is as follows. Binds specifically to cytosolic chaperonin (c-CPN) and transfers target proteins to it. Binds to nascent polypeptide chain and promotes folding in an environment in which there are many competing pathways for nonnative proteins. This Dictyostelium discoideum (Social amoeba) protein is Probable prefoldin subunit 5 (pfdn5).